A 181-amino-acid chain; its full sequence is ABC transporter E family member 3 (181 aa).

In terms of domain architecture, ABC transporter spans 20 to 176; the sequence is SQIIVMLGEN…KAAFARFHNG (157 aa). ATP is bound at residue 27 to 34; the sequence is GENGTGKT.

Belongs to the ABC transporter superfamily. ABCE family. Mostly expressed in roots and leaves, and, to a lower extent, in stems, flowers and siliques.

The chain is ABC transporter E family member 3 (ABCE3) from Arabidopsis thaliana (Mouse-ear cress).